Here is an 83-residue protein sequence, read N- to C-terminus: U-actitoxin-Aeq6a (83 aa).

An N-terminal signal peptide occupies residues 1-20 (MIYKAVFVCLVLVLLGDVFC). The propeptide occupies 21–36 (SPRNSGGGTLNDNPFE). Proline 82 is subject to Proline amide.

Contains 3 disulfide bonds. Expressed by acrorhagi.

Its subcellular location is the secreted. The protein localises to the nematocyst. Its function is as follows. Toxin. The protein is U-actitoxin-Aeq6a of Actinia equina (Beadlet anemone).